Here is a 167-residue protein sequence, read N- to C-terminus: uncharacterized protein (167 aa).

It localises to the virion. This is an uncharacterized protein from Acanthamoeba polyphaga (Amoeba).